Here is a 317-residue protein sequence, read N- to C-terminus: 3',5'-bisphosphate nucleotidase (317 aa).

Aspartate 46 functions as the Proton acceptor in the catalytic mechanism. Mg(2+) is bound by residues glutamate 69, aspartate 118, isoleucine 120, and aspartate 121. Residue threonine 123 is the Proton acceptor of the active site. Position 123 (threonine 123) interacts with adenosine 3',5'-bisphosphate. 7 residues coordinate AMP: serine 198, histidine 203, serine 227, lysine 230, arginine 244, tyrosine 251, and aspartate 257. Residues histidine 203, serine 227, lysine 230, and arginine 244 each coordinate adenosine 3',5'-bisphosphate. A Mg(2+)-binding site is contributed by aspartate 257. Aspartate 257 contacts adenosine 3',5'-bisphosphate.

It belongs to the inositol monophosphatase superfamily. Monomer. The cofactor is Mg(2+).

Its subcellular location is the cytoplasm. The catalysed reaction is adenosine 3',5'-bisphosphate + H2O = AMP + phosphate. It catalyses the reaction 1D-myo-inositol 1,4-bisphosphate + H2O = 1D-myo-inositol 4-phosphate + phosphate. Inhibited by Li(2+). In terms of biological role, phosphatase that converts 3'-phosphoadenosine 5'-phosphate (PAP) to AMP. Is also able to hydrolyze inositol 1,4-bisphosphate but with less efficiency. This is 3',5'-bisphosphate nucleotidase from Entamoeba histolytica (strain ATCC 30459 / HM-1:IMSS / ABRM).